Consider the following 130-residue polypeptide: Small ribosomal subunit protein bS6 (130 aa).

The tract at residues 99-130 is disordered; sequence ASPMVKAKDERRERHDFASEANDDSEAGDSEE. The segment covering 104–116 has biased composition (basic and acidic residues); that stretch reads KAKDERRERHDFA. The segment covering 119–130 has biased composition (acidic residues); it reads ANDDSEAGDSEE.

It belongs to the bacterial ribosomal protein bS6 family.

Functionally, binds together with bS18 to 16S ribosomal RNA. The sequence is that of Small ribosomal subunit protein bS6 from Yersinia enterocolitica serotype O:8 / biotype 1B (strain NCTC 13174 / 8081).